The primary structure comprises 723 residues: FACT complex subunit Ssrp1 (723 aa).

The residue at position 443 (serine 443) is a Phosphoserine. 2 disordered regions span residues 459–564 and 586–723; these read EARE…AFML and AKKG…EASD. Composition is skewed to acidic residues over residues 464–478 and 486–507; these read EEDD…ESTD and NESD…DDSD. Residues 531 to 557 show a composition bias toward basic residues; that stretch reads KKEKKHKEKERTKKPSKKKKDSGKPKR. Positions 555–621 form a DNA-binding region, HMG box; that stretch reads PKRATTAFML…RYHDEMRNYK (67 aa). The span at 586 to 621 shows a compositional bias: basic and acidic residues; that stretch reads AKKGGEMWKELKDKSKWEDAAAKDKQRYHDEMRNYK. Serine 628 carries the post-translational modification Phosphoserine. Positions 644 to 656 are enriched in polar residues; that stretch reads PSPSKKANTSGSG. Phosphoserine occurs at positions 664 and 668. A compositionally biased stretch (acidic residues) spans 664 to 676; sequence SDDDSTSSDDEKD. Threonine 669 carries the post-translational modification Phosphothreonine. Residues serine 670 and serine 671 each carry the phosphoserine modification. The segment covering 677 to 692 has biased composition (basic and acidic residues); the sequence is NEPAKKKSKPPSDGDA. Residues 702-723 show a composition bias toward acidic residues; that stretch reads EPEESEEDSNASDEDEEDEASD.

It belongs to the SSRP1 family. In terms of assembly, component of the FACT complex, a stable heterodimer of dre4/spt16 and Ssrp. Interacts with CHD1 and TRL/GAGA. In terms of tissue distribution, expressed at highest levels in nurse cells of the ovary.

The protein localises to the nucleus. It localises to the chromosome. Its subcellular location is the nucleolus. Functionally, component of the FACT complex, a general chromatin factor that acts to reorganize nucleosomes. The FACT complex is involved in multiple processes that require DNA as a template such as mRNA elongation, DNA replication and DNA repair. During transcription elongation the FACT complex acts as a histone chaperone that both destabilizes and restores nucleosomal structure. It facilitates the passage of RNA polymerase II and transcription by promoting the dissociation of one histone H2A-H2B dimer from the nucleosome, then subsequently promotes the reestablishment of the nucleosome following the passage of RNA polymerase II. Binds specifically to single-stranded DNA and RNA with highest affinity for nucleotides G and U. The FACT complex is required for expression of Hox genes. The sequence is that of FACT complex subunit Ssrp1 (Ssrp) from Drosophila melanogaster (Fruit fly).